A 417-amino-acid polypeptide reads, in one-letter code: Biofilm dispersion protein BdlA (417 aa).

The PAS 1 domain maps to 1 to 66; it reads MAALDRSMAR…RRFWERLRRG (66 aa). Residues 67-114 form the PAC 1 domain; sequence EHFSGRCKRITREGRPLWLEATYNPVRDGQGRLLKVVKYASDIDAIVH. The PAS 2 domain occupies 115-188; sequence QEHEMQSKLD…ADLWRRLNRG (74 aa). One can recognise a PAC 2 domain in the interval 191 to 241; it reads VTGQFRRVHRNGQPVWLEASYNPVYDADGKLYKVVKFASDVSDRMRRYQAE. One can recognise a Methyl-accepting transducer domain in the interval 242 to 417; it reads ADNAHQAHTL…QFSRTLNADL (176 aa).

Functionally, essential for biofilm dispersion by sensing environmental cues. May be involved in sensing and transducing signals within cells, resulting in the modulation of c-di-GMP levels, swimming motility and adhesiveness of the bacterial cell surface. The sequence is that of Biofilm dispersion protein BdlA (bdlA) from Pseudomonas aeruginosa (strain ATCC 15692 / DSM 22644 / CIP 104116 / JCM 14847 / LMG 12228 / 1C / PRS 101 / PAO1).